A 163-amino-acid chain; its full sequence is Crossover junction endodeoxyribonuclease RuvC (163 aa).

Active-site residues include Asp7, Glu67, and Asp140. Asp7, Glu67, and Asp140 together coordinate Mg(2+).

Belongs to the RuvC family. As to quaternary structure, homodimer which binds Holliday junction (HJ) DNA. The HJ becomes 2-fold symmetrical on binding to RuvC with unstacked arms; it has a different conformation from HJ DNA in complex with RuvA. In the full resolvosome a probable DNA-RuvA(4)-RuvB(12)-RuvC(2) complex forms which resolves the HJ. Requires Mg(2+) as cofactor.

The protein localises to the cytoplasm. The enzyme catalyses Endonucleolytic cleavage at a junction such as a reciprocal single-stranded crossover between two homologous DNA duplexes (Holliday junction).. Functionally, the RuvA-RuvB-RuvC complex processes Holliday junction (HJ) DNA during genetic recombination and DNA repair. Endonuclease that resolves HJ intermediates. Cleaves cruciform DNA by making single-stranded nicks across the HJ at symmetrical positions within the homologous arms, yielding a 5'-phosphate and a 3'-hydroxyl group; requires a central core of homology in the junction. The consensus cleavage sequence is 5'-(A/T)TT(C/G)-3'. Cleavage occurs on the 3'-side of the TT dinucleotide at the point of strand exchange. HJ branch migration catalyzed by RuvA-RuvB allows RuvC to scan DNA until it finds its consensus sequence, where it cleaves and resolves the cruciform DNA. The polypeptide is Crossover junction endodeoxyribonuclease RuvC (Petrotoga mobilis (strain DSM 10674 / SJ95)).